A 357-amino-acid chain; its full sequence is Cytoplasmic tRNA 2-thiolation protein 1 (357 aa).

A disordered region spans residues 314 to 348 (GVSRTRGRRGEKAGLHPDVGRGGGGGSSGPAEVAS). Residues 321 to 332 (RRGEKAGLHPDV) show a composition bias toward basic and acidic residues.

Belongs to the TtcA family. CTU1/NCS6/ATPBD3 subfamily.

The protein localises to the cytoplasm. It participates in tRNA modification; 5-methoxycarbonylmethyl-2-thiouridine-tRNA biosynthesis. Its function is as follows. Plays a central role in 2-thiolation of mcm(5)S(2)U at tRNA wobble positions of tRNA(Lys), tRNA(Glu) and tRNA(Gln). Directly binds tRNAs and probably acts by catalyzing adenylation of tRNAs, an intermediate required for 2-thiolation. It is unclear whether it acts as a sulfurtransferase that transfers sulfur from thiocarboxylated URM1 onto the uridine of tRNAs at wobble position. In Chlamydomonas reinhardtii (Chlamydomonas smithii), this protein is Cytoplasmic tRNA 2-thiolation protein 1.